The chain runs to 92 residues: MARVLVVTTVYPSSPEINLDELVEKIKSKLPSDYEITRYDKVPIAFGLNALKLYVIIPEESEGGTSKLEEILQSVEGVEEIEVEAVHRISEY.

This sequence belongs to the EF-1-beta/EF-1-delta family.

In terms of biological role, promotes the exchange of GDP for GTP in EF-1-alpha/GDP, thus allowing the regeneration of EF-1-alpha/GTP that could then be used to form the ternary complex EF-1-alpha/GTP/AAtRNA. This Hyperthermus butylicus (strain DSM 5456 / JCM 9403 / PLM1-5) protein is Elongation factor 1-beta.